The sequence spans 43 residues: Potassium channel toxin gamma-KTx 4.13 (43 aa).

4 cysteine pairs are disulfide-bonded: C5/C23, C11/C34, C20/C39, and C24/C41.

The protein belongs to the ergtoxin family. Gamma-KTx 4 subfamily. In terms of tissue distribution, expressed by the venom gland.

It localises to the secreted. Reversibly blocks Kv11/ERG potassium channels. The sequence is that of Potassium channel toxin gamma-KTx 4.13 from Centruroides noxius (Mexican scorpion).